A 624-amino-acid polypeptide reads, in one-letter code: Dihydroxy-acid dehydratase (624 aa).

Aspartate 81 is a binding site for Mg(2+). Cysteine 122 serves as a coordination point for [2Fe-2S] cluster. Mg(2+) is bound by residues aspartate 123 and lysine 124. At lysine 124 the chain carries N6-carboxylysine. Cysteine 195 contributes to the [2Fe-2S] cluster binding site. Glutamate 499 contacts Mg(2+). Serine 525 (proton acceptor) is an active-site residue.

This sequence belongs to the IlvD/Edd family. In terms of assembly, homodimer. [2Fe-2S] cluster is required as a cofactor. Mg(2+) serves as cofactor.

The enzyme catalyses (2R)-2,3-dihydroxy-3-methylbutanoate = 3-methyl-2-oxobutanoate + H2O. It catalyses the reaction (2R,3R)-2,3-dihydroxy-3-methylpentanoate = (S)-3-methyl-2-oxopentanoate + H2O. The protein operates within amino-acid biosynthesis; L-isoleucine biosynthesis; L-isoleucine from 2-oxobutanoate: step 3/4. Its pathway is amino-acid biosynthesis; L-valine biosynthesis; L-valine from pyruvate: step 3/4. In terms of biological role, functions in the biosynthesis of branched-chain amino acids. Catalyzes the dehydration of (2R,3R)-2,3-dihydroxy-3-methylpentanoate (2,3-dihydroxy-3-methylvalerate) into 2-oxo-3-methylpentanoate (2-oxo-3-methylvalerate) and of (2R)-2,3-dihydroxy-3-methylbutanoate (2,3-dihydroxyisovalerate) into 2-oxo-3-methylbutanoate (2-oxoisovalerate), the penultimate precursor to L-isoleucine and L-valine, respectively. This Shewanella baltica (strain OS185) protein is Dihydroxy-acid dehydratase.